The primary structure comprises 145 residues: FAD synthase (145 aa).

ATP is bound by residues 9–10, 14–17, D94, and Y122; these read TF and HPGH.

The protein belongs to the archaeal FAD synthase family. As to quaternary structure, homodimer. It depends on a divalent metal cation as a cofactor.

It carries out the reaction FMN + ATP + H(+) = FAD + diphosphate. It participates in cofactor biosynthesis; FAD biosynthesis; FAD from FMN: step 1/1. In terms of biological role, catalyzes the transfer of the AMP portion of ATP to flavin mononucleotide (FMN) to produce flavin adenine dinucleotide (FAD) coenzyme. The sequence is that of FAD synthase from Methanocaldococcus infernus (strain DSM 11812 / JCM 15783 / ME).